Consider the following 436-residue polypeptide: Chaperone SurA (436 aa).

An N-terminal signal peptide occupies residues 1-30; it reads MKFFQRPERRLKQWGLALLLAASALLPARA. PpiC domains follow at residues 180–281 and 291–389; these read ETEY…KLVD and VTQT…QVLE.

Its subcellular location is the periplasm. It carries out the reaction [protein]-peptidylproline (omega=180) = [protein]-peptidylproline (omega=0). In terms of biological role, chaperone involved in the correct folding and assembly of outer membrane proteins. Recognizes specific patterns of aromatic residues and the orientation of their side chains, which are found more frequently in integral outer membrane proteins. May act in both early periplasmic and late outer membrane-associated steps of protein maturation. The sequence is that of Chaperone SurA from Thiobacillus denitrificans (strain ATCC 25259 / T1).